The primary structure comprises 202 residues: dTTP/UTP pyrophosphatase (202 aa).

The active-site Proton acceptor is the Asp74.

Belongs to the Maf family. YhdE subfamily. It depends on a divalent metal cation as a cofactor.

It localises to the cytoplasm. The enzyme catalyses dTTP + H2O = dTMP + diphosphate + H(+). The catalysed reaction is UTP + H2O = UMP + diphosphate + H(+). Its function is as follows. Nucleoside triphosphate pyrophosphatase that hydrolyzes dTTP and UTP. May have a dual role in cell division arrest and in preventing the incorporation of modified nucleotides into cellular nucleic acids. The chain is dTTP/UTP pyrophosphatase from Methylococcus capsulatus (strain ATCC 33009 / NCIMB 11132 / Bath).